Reading from the N-terminus, the 29-residue chain is Dermaseptin-J8 (29 aa).

In terms of tissue distribution, expressed by the skin glands.

The protein localises to the secreted. In terms of biological role, has antimicrobial activity. The sequence is that of Dermaseptin-J8 from Phasmahyla jandaia (Jandaia leaf frog).